A 464-amino-acid polypeptide reads, in one-letter code: DNA primase DnaG (464 aa).

Residues 198–272 enclose the Toprim domain; sequence DSIIVVEGRA…DVDYVARAPE (75 aa). Residues glutamate 204, aspartate 246, and aspartate 248 each coordinate Mg(2+). The span at 315–333 shows a compositional bias: basic and acidic residues; the sequence is RESEGERQPRQVTKPEPEV. Residues 315–351 form a disordered region; sequence RESEGERQPRQVTKPEPEVVKAQPKAETPEEKREPAT.

Belongs to the archaeal DnaG primase family. As to quaternary structure, forms a ternary complex with MCM helicase and DNA. Component of the archaeal exosome complex. The cofactor is Mg(2+).

It carries out the reaction ssDNA + n NTP = ssDNA/pppN(pN)n-1 hybrid + (n-1) diphosphate.. Its function is as follows. RNA polymerase that catalyzes the synthesis of short RNA molecules used as primers for DNA polymerase during DNA replication. Also part of the exosome, which is a complex involved in RNA degradation. Acts as a poly(A)-binding protein that enhances the interaction between heteromeric, adenine-rich transcripts and the exosome. The sequence is that of DNA primase DnaG from Thermococcus kodakarensis (strain ATCC BAA-918 / JCM 12380 / KOD1) (Pyrococcus kodakaraensis (strain KOD1)).